A 315-amino-acid polypeptide reads, in one-letter code: Acetyl-coenzyme A carboxylase carboxyl transferase subunit alpha (315 aa).

Residues 40-293 enclose the CoA carboxyltransferase C-terminal domain; sequence LQDKSKTLTE…RAELSSQLAM (254 aa).

The protein belongs to the AccA family. As to quaternary structure, acetyl-CoA carboxylase is a heterohexamer composed of biotin carboxyl carrier protein (AccB), biotin carboxylase (AccC) and two subunits each of ACCase subunit alpha (AccA) and ACCase subunit beta (AccD).

It localises to the cytoplasm. The catalysed reaction is N(6)-carboxybiotinyl-L-lysyl-[protein] + acetyl-CoA = N(6)-biotinyl-L-lysyl-[protein] + malonyl-CoA. It participates in lipid metabolism; malonyl-CoA biosynthesis; malonyl-CoA from acetyl-CoA: step 1/1. In terms of biological role, component of the acetyl coenzyme A carboxylase (ACC) complex. First, biotin carboxylase catalyzes the carboxylation of biotin on its carrier protein (BCCP) and then the CO(2) group is transferred by the carboxyltransferase to acetyl-CoA to form malonyl-CoA. This is Acetyl-coenzyme A carboxylase carboxyl transferase subunit alpha from Pseudomonas fluorescens (strain Pf0-1).